Here is a 458-residue protein sequence, read N- to C-terminus: UDP-N-acetylglucosamine 1-carboxyvinyltransferase (458 aa).

22-23 (KN) serves as a coordination point for phosphoenolpyruvate. Arginine 94 lines the UDP-N-acetyl-alpha-D-glucosamine pocket. The active-site Proton donor is the aspartate 119. UDP-N-acetyl-alpha-D-glucosamine-binding residues include aspartate 309 and valine 331.

The protein belongs to the EPSP synthase family. MurA subfamily.

It localises to the cytoplasm. It carries out the reaction phosphoenolpyruvate + UDP-N-acetyl-alpha-D-glucosamine = UDP-N-acetyl-3-O-(1-carboxyvinyl)-alpha-D-glucosamine + phosphate. It functions in the pathway cell wall biogenesis; peptidoglycan biosynthesis. In terms of biological role, cell wall formation. Adds enolpyruvyl to UDP-N-acetylglucosamine. In Chlamydia pneumoniae (Chlamydophila pneumoniae), this protein is UDP-N-acetylglucosamine 1-carboxyvinyltransferase.